The chain runs to 320 residues: MENNKKQGVLLVNLGTPDSATPAGVRRFLSEFLHDKRVVNLTRWLWCPILHGVILPIRAPKVAKLYQSVWMDEGSPLLVYSQRQAEKLQKKLQIPVALGMTYGNPSLKTGVEQLMDQGVEDIIVLPLYPQYSGTTTAAVSDGLTKAFKQMPVIPSYRFIRDYYAHPSYAKALAESVRSHWDKNGRADHLVCSFHGIPKRLADEGDIYPQHCEATTELLAAELGLSADDITMTYQSRFGREEWLKPYTDETLESLPSKGIKKIDIMAPAFSVDCLETLEEISDQCKETFIDAGGSDFSYITCLNDRDSHIDMMAELVALYR.

Fe cation-binding residues include histidine 194 and glutamate 275.

The protein belongs to the ferrochelatase family.

Its subcellular location is the cytoplasm. It catalyses the reaction heme b + 2 H(+) = protoporphyrin IX + Fe(2+). It functions in the pathway porphyrin-containing compound metabolism; protoheme biosynthesis; protoheme from protoporphyrin-IX: step 1/1. Catalyzes the ferrous insertion into protoporphyrin IX. This chain is Ferrochelatase, found in Vibrio atlanticus (strain LGP32) (Vibrio splendidus (strain Mel32)).